A 30-amino-acid chain; its full sequence is Photosystem I reaction center subunit XII (30 aa).

A helical membrane pass occupies residues 5-25; it reads SQIFFALCIALTAAVLAIGLG.

It belongs to the PsaM family.

The protein localises to the plastid. Its subcellular location is the chloroplast thylakoid membrane. This chain is Photosystem I reaction center subunit XII, found in Emiliania huxleyi (Coccolithophore).